A 230-amino-acid chain; its full sequence is Small ribosomal subunit protein uS3 (230 aa).

The KH type-2 domain maps to valine 39–arginine 107.

The protein belongs to the universal ribosomal protein uS3 family. As to quaternary structure, part of the 30S ribosomal subunit. Forms a tight complex with proteins S10 and S14.

Functionally, binds the lower part of the 30S subunit head. Binds mRNA in the 70S ribosome, positioning it for translation. The polypeptide is Small ribosomal subunit protein uS3 (Alcanivorax borkumensis (strain ATCC 700651 / DSM 11573 / NCIMB 13689 / SK2)).